Here is an 87-residue protein sequence, read N- to C-terminus: Small ribosomal subunit protein bS16 (87 aa).

Belongs to the bacterial ribosomal protein bS16 family.

This is Small ribosomal subunit protein bS16 from Buchnera aphidicola subsp. Baizongia pistaciae (strain Bp).